An 851-amino-acid chain; its full sequence is DNA mismatch repair protein MutS (851 aa).

Position 602-609 (602-609 (GPNMSGKS)) interacts with ATP.

Belongs to the DNA mismatch repair MutS family.

In terms of biological role, this protein is involved in the repair of mismatches in DNA. It is possible that it carries out the mismatch recognition step. This protein has a weak ATPase activity. In Streptococcus pyogenes serotype M18 (strain MGAS8232), this protein is DNA mismatch repair protein MutS.